We begin with the raw amino-acid sequence, 379 residues long: Elongation factor Ts, mitochondrial (379 aa).

The N-terminal 33 residues, 1–33 (MAWGQGAKRSILGLLFRSQHQTARAYSSSAFQT), are a transit peptide targeting the mitochondrion.

Belongs to the EF-Ts family.

The protein resides in the mitochondrion. Functionally, associates with the EF-Tu.GDP complex and induces the exchange of GDP to GTP. It remains bound to the aminoacyl-tRNA.EF-Tu.GTP complex up to the GTP hydrolysis stage on the ribosome. This is Elongation factor Ts, mitochondrial from Zea mays (Maize).